A 425-amino-acid polypeptide reads, in one-letter code: Putative E3 ubiquitin-protein ligase UBR7 (425 aa).

A UBR-type zinc finger spans residues 44–116 (EKCSYSQGSV…KNLECKLFPD (73 aa)). The PHD-type; atypical zinc finger occupies 132–188 (GLYCVCKRPYPDPEDEVPDEMIQCVVCEDWFHGRHLGAIPPESGDFQEMVCQACMRR). A disordered region spans residues 212 to 269 (LPNATGMGDEDVSKPENGAPQDNGLKEDAPEHGRDSVNEVKAEQKNEPCSSSSSESDL). Glycyl lysine isopeptide (Lys-Gly) (interchain with G-Cter in SUMO2) cross-links involve residues Lys-225 and Lys-252. Over residues 235-257 (GLKEDAPEHGRDSVNEVKAEQKN) the composition is skewed to basic and acidic residues. Residue Ser-264 is modified to Phosphoserine. Residues Lys-274 and Lys-398 each participate in a glycyl lysine isopeptide (Lys-Gly) (interchain with G-Cter in SUMO2) cross-link.

In terms of tissue distribution, expressed in testis and sperm (at protein level).

It catalyses the reaction S-ubiquitinyl-[E2 ubiquitin-conjugating enzyme]-L-cysteine + [acceptor protein]-L-lysine = [E2 ubiquitin-conjugating enzyme]-L-cysteine + N(6)-ubiquitinyl-[acceptor protein]-L-lysine.. Its pathway is protein modification; protein ubiquitination. Its function is as follows. E3 ubiquitin-protein ligase which is a component of the N-end rule pathway. Recognizes and binds to proteins bearing specific N-terminal residues that are destabilizing according to the N-end rule, leading to their ubiquitination and subsequent degradation. The chain is Putative E3 ubiquitin-protein ligase UBR7 (Ubr7) from Mus musculus (Mouse).